The chain runs to 335 residues: Beta-ketoacyl-[acyl-carrier-protein] synthase III (335 aa).

Active-site residues include C119 and H261. Residues 262-266 (QANQR) form an ACP-binding region. N291 is an active-site residue.

The protein belongs to the thiolase-like superfamily. FabH family. As to quaternary structure, homodimer.

It is found in the cytoplasm. It carries out the reaction malonyl-[ACP] + acetyl-CoA + H(+) = 3-oxobutanoyl-[ACP] + CO2 + CoA. It participates in lipid metabolism; fatty acid biosynthesis. Its function is as follows. Catalyzes the condensation reaction of fatty acid synthesis by the addition to an acyl acceptor of two carbons from malonyl-ACP. Catalyzes the first condensation reaction which initiates fatty acid synthesis and may therefore play a role in governing the total rate of fatty acid production. Possesses both acetoacetyl-ACP synthase and acetyl transacylase activities. Its substrate specificity determines the biosynthesis of branched-chain and/or straight-chain of fatty acids. This chain is Beta-ketoacyl-[acyl-carrier-protein] synthase III, found in Prochlorococcus marinus (strain MIT 9301).